A 118-amino-acid chain; its full sequence is NLIQFGNMIQCANKGSRPTRHYMDYGCYCGWGGSGTPVDELDRCCKVHDDCYGEAEKKGCYPKLTLYSWDCTGNVPICSPKAECKDFVCACDAEAAKCFAKATYNDANWNIDTKTRCK.

Cystine bridges form between C11-C71, C27-C117, C29-C45, C44-C98, C51-C91, C60-C84, and C78-C89. Residues Y28, G30, and G32 each coordinate Ca(2+). The active site involves H48. D49 is a binding site for Ca(2+). D92 is a catalytic residue.

This sequence belongs to the phospholipase A2 family. Group I subfamily. D49 sub-subfamily. It depends on Ca(2+) as a cofactor. In terms of tissue distribution, expressed by the venom gland.

It localises to the secreted. The enzyme catalyses a 1,2-diacyl-sn-glycero-3-phosphocholine + H2O = a 1-acyl-sn-glycero-3-phosphocholine + a fatty acid + H(+). PLA2 catalyzes the calcium-dependent hydrolysis of the 2-acyl groups in 3-sn-phosphoglycerides. This chain is Acidic phospholipase A2 PA-3, found in Pseudechis australis (Mulga snake).